The sequence spans 234 residues: 7-cyano-7-deazaguanine synthase (234 aa).

13-23 contacts ATP; it reads FSGGIDSTTCL. Zn(2+) contacts are provided by C197, C207, C210, and C213.

It belongs to the QueC family. Zn(2+) serves as cofactor.

It carries out the reaction 7-carboxy-7-deazaguanine + NH4(+) + ATP = 7-cyano-7-deazaguanine + ADP + phosphate + H2O + H(+). It participates in purine metabolism; 7-cyano-7-deazaguanine biosynthesis. Functionally, catalyzes the ATP-dependent conversion of 7-carboxy-7-deazaguanine (CDG) to 7-cyano-7-deazaguanine (preQ(0)). This Syntrophobacter fumaroxidans (strain DSM 10017 / MPOB) protein is 7-cyano-7-deazaguanine synthase.